A 157-amino-acid chain; its full sequence is MSIEVNNESGVTVDEAQLVALARFVFERLYIHPQAELSILLVDEPAMEKLHLELMDEPGATDVLSVPMDELTPGTPDKPTPQGMLGDIAVCPQVAEVQARNAGHSTQDEMLLLTTHGILHLLGYDHADPEEKEEMFGLQRELLEGFTGKEAPSETMQ.

The Zn(2+) site is built by histidine 116, histidine 120, and histidine 126.

The protein belongs to the endoribonuclease YbeY family. Requires Zn(2+) as cofactor.

It localises to the cytoplasm. In terms of biological role, single strand-specific metallo-endoribonuclease involved in late-stage 70S ribosome quality control and in maturation of the 3' terminus of the 16S rRNA. The sequence is that of Endoribonuclease YbeY from Arthrobacter sp. (strain FB24).